A 345-amino-acid chain; its full sequence is D(2) dopamine receptor B (345 aa).

Residues 1-10 (EWRFSRIHCD) are Extracellular-facing. A disulfide bridge connects residues Cys9 and Cys84. A helical transmembrane segment spans residues 11–32 (IFVTLDVMMCTASILNLCAISI). Residues 33 to 53 (DRYTAVAMPMLYNTRYSSKRR) lie on the Cytoplasmic side of the membrane. A helical transmembrane segment spans residues 54–74 (VTVMISVVWVLSFAISCPLLF). The Extracellular segment spans residues 75-90 (GLNNTASTVCIIDNPA). A glycan (N-linked (GlcNAc...) asparagine) is linked at Asn77. The helical transmembrane segment at 91 to 115 (FVIYSSIVSFYVPFIVTLLVYVQIY) threads the bilayer. The Cytoplasmic segment spans residues 116-275 (IVLRKRRKRV…SQHKEKKATQ (160 aa)). Residues 166–177 (KKKVEAGNHPED) are compositionally biased toward basic and acidic residues. The tract at residues 166-199 (KKKVEAGNHPEDMEMEMMSSTSPPEKTKHKSASP) is disordered. Residues 276–297 (MLAIVLGVFIICWLPFFITHIL) form a helical membrane-spanning segment. The Extracellular portion of the chain corresponds to 298–311 (NMHCNCNIPQALYS). Cys301 and Cys303 are disulfide-bonded. A helical membrane pass occupies residues 312-333 (AFTWLGYVNSAVNPIIYTTFNV). The Cytoplasmic segment spans residues 334–345 (EFRKAFIKILHC). The S-palmitoyl cysteine moiety is linked to residue Cys345.

The protein belongs to the G-protein coupled receptor 1 family. Post-translationally, palmitoylated. Palmitoylation is probably required for proper localization to the plasma membrane and stability of the receptor. As to expression, brain; pituitary.

Its subcellular location is the cell membrane. It is found in the golgi apparatus membrane. This is one of the five types (D1 to D5) of receptors for dopamine. The activity of this receptor is mediated by G proteins which inhibits adenylyl cyclase. In Xenopus D2R is involved in the regulation of the melanotrope cells of the intermediate pituitary during background adaptation of the animal. The polypeptide is D(2) dopamine receptor B (drd2-b) (Xenopus laevis (African clawed frog)).